Reading from the N-terminus, the 459-residue chain is Methylenetetrahydrofolate--tRNA-(uracil-5-)-methyltransferase TrmFO (459 aa).

Position 26–31 (26–31) interacts with FAD; the sequence is GGGLAG.

It belongs to the MnmG family. TrmFO subfamily. FAD is required as a cofactor.

The protein localises to the cytoplasm. The catalysed reaction is uridine(54) in tRNA + (6R)-5,10-methylene-5,6,7,8-tetrahydrofolate + NADH + H(+) = 5-methyluridine(54) in tRNA + (6S)-5,6,7,8-tetrahydrofolate + NAD(+). It carries out the reaction uridine(54) in tRNA + (6R)-5,10-methylene-5,6,7,8-tetrahydrofolate + NADPH + H(+) = 5-methyluridine(54) in tRNA + (6S)-5,6,7,8-tetrahydrofolate + NADP(+). Catalyzes the folate-dependent formation of 5-methyl-uridine at position 54 (M-5-U54) in all tRNAs. This chain is Methylenetetrahydrofolate--tRNA-(uracil-5-)-methyltransferase TrmFO, found in Synechococcus sp. (strain JA-2-3B'a(2-13)) (Cyanobacteria bacterium Yellowstone B-Prime).